We begin with the raw amino-acid sequence, 429 residues long: Serine hydroxymethyltransferase (429 aa).

Residues Leu128 and 132-134 each bind (6S)-5,6,7,8-tetrahydrofolate; that span reads GHL. An N6-(pyridoxal phosphate)lysine modification is found at Lys237.

It belongs to the SHMT family. In terms of assembly, homodimer. Requires pyridoxal 5'-phosphate as cofactor.

The protein localises to the cytoplasm. The enzyme catalyses (6R)-5,10-methylene-5,6,7,8-tetrahydrofolate + glycine + H2O = (6S)-5,6,7,8-tetrahydrofolate + L-serine. It participates in one-carbon metabolism; tetrahydrofolate interconversion. It functions in the pathway amino-acid biosynthesis; glycine biosynthesis; glycine from L-serine: step 1/1. Its function is as follows. Catalyzes the reversible interconversion of serine and glycine with tetrahydrofolate (THF) serving as the one-carbon carrier. This reaction serves as the major source of one-carbon groups required for the biosynthesis of purines, thymidylate, methionine, and other important biomolecules. Also exhibits THF-independent aldolase activity toward beta-hydroxyamino acids, producing glycine and aldehydes, via a retro-aldol mechanism. The chain is Serine hydroxymethyltransferase from Caulobacter vibrioides (strain ATCC 19089 / CIP 103742 / CB 15) (Caulobacter crescentus).